Here is a 178-residue protein sequence, read N- to C-terminus: Interleukin-10 (178 aa).

The first 18 residues, 1-18, serve as a signal peptide directing secretion; it reads MHSSALLCFLVFLAGVGA. An N-linked (GlcNAc...) asparagine glycan is attached at asparagine 29. Intrachain disulfides connect cysteine 30-cysteine 126 and cysteine 80-cysteine 132. Asparagine 134 carries an N-linked (GlcNAc...) asparagine glycan.

Belongs to the IL-10 family. Homodimer. Interacts with IL10RA and IL10RB.

The protein resides in the secreted. Its function is as follows. Major immune regulatory cytokine that acts on many cells of the immune system where it has profound anti-inflammatory functions, limiting excessive tissue disruption caused by inflammation. Mechanistically, IL10 binds to its heterotetrameric receptor comprising IL10RA and IL10RB leading to JAK1 and STAT2-mediated phosphorylation of STAT3. In turn, STAT3 translocates to the nucleus where it drives expression of anti-inflammatory mediators. Targets antigen-presenting cells (APCs) such as macrophages and monocytes and inhibits their release of pro-inflammatory cytokines including granulocyte-macrophage colony-stimulating factor /GM-CSF, granulocyte colony-stimulating factor/G-CSF, IL-1 alpha, IL-1 beta, IL-6, IL-8 and TNF-alpha. Also interferes with antigen presentation by reducing the expression of MHC-class II and co-stimulatory molecules, thereby inhibiting their ability to induce T cell activation. In addition, controls the inflammatory response of macrophages by reprogramming essential metabolic pathways including mTOR signaling. The chain is Interleukin-10 (IL10) from Felis catus (Cat).